The following is a 125-amino-acid chain: Fluoride-specific ion channel FluC (125 aa).

4 helical membrane passes run 6–26 (GFIA…SGLV), 34–54 (FPWG…LVWE), 68–88 (AVLL…IFES), and 98–118 (LALL…LFAG). 2 residues coordinate Na(+): glycine 76 and threonine 79.

It belongs to the fluoride channel Fluc/FEX (TC 1.A.43) family.

Its subcellular location is the cell inner membrane. The enzyme catalyses fluoride(in) = fluoride(out). With respect to regulation, na(+) is not transported, but it plays an essential structural role and its presence is essential for fluoride channel function. Fluoride-specific ion channel. Important for reducing fluoride concentration in the cell, thus reducing its toxicity. The chain is Fluoride-specific ion channel FluC from Solidesulfovibrio magneticus (strain ATCC 700980 / DSM 13731 / RS-1) (Desulfovibrio magneticus).